Reading from the N-terminus, the 506-residue chain is tRNA-2-methylthio-N(6)-dimethylallyladenosine synthase (506 aa).

The MTTase N-terminal domain occupies Lys14–Val132. Cys23, Cys61, Cys95, Cys169, Cys173, and Cys176 together coordinate [4Fe-4S] cluster. One can recognise a Radical SAM core domain in the interval Arg155–Glu386. Positions Lys388–Pro456 constitute a TRAM domain.

This sequence belongs to the methylthiotransferase family. MiaB subfamily. In terms of assembly, monomer. It depends on [4Fe-4S] cluster as a cofactor.

The protein localises to the cytoplasm. It catalyses the reaction N(6)-dimethylallyladenosine(37) in tRNA + (sulfur carrier)-SH + AH2 + 2 S-adenosyl-L-methionine = 2-methylsulfanyl-N(6)-dimethylallyladenosine(37) in tRNA + (sulfur carrier)-H + 5'-deoxyadenosine + L-methionine + A + S-adenosyl-L-homocysteine + 2 H(+). Catalyzes the methylthiolation of N6-(dimethylallyl)adenosine (i(6)A), leading to the formation of 2-methylthio-N6-(dimethylallyl)adenosine (ms(2)i(6)A) at position 37 in tRNAs that read codons beginning with uridine. In Streptomyces griseus subsp. griseus (strain JCM 4626 / CBS 651.72 / NBRC 13350 / KCC S-0626 / ISP 5235), this protein is tRNA-2-methylthio-N(6)-dimethylallyladenosine synthase.